The following is a 608-amino-acid chain: Pentatricopeptide repeat-containing protein 1, apicoplast (608 aa).

PPR repeat units follow at residues 165–199 (TTLAFNAAMSAVEKKGCLSTMLDLIGTMKSKNIKP), 200–230 (DLVSYKLVLSLCDKYHLVDTAEILFEEMIES), 236–270 (NYEIYAIMISCYAKTGNGYKAIELFEKLRNDPFVE), 336–370 (QYSEYANVIYACNISNLYEQGIKYFEELLKSGKYM), 372–402 (SIFVFENIFDLLSKNGDYEKSLEYYNNLKND), 410–445 (NVNILNNLLKALSIHNKINVAEDIWNNEFDELLLTP), and 446–480 (NNLSYQILLKIYSHIDNYEKAFKLFKEMQVNKLLN).

The protein belongs to the PPR family. P subfamily. In terms of assembly, homodimer.

It localises to the plastid. The protein localises to the apicoplast. Its function is as follows. Binds to apicoplast RNA transcripts, preferentially to the motif UUAU, and protects RNA transcripts from degradation by ribonuclease. The sequence is that of Pentatricopeptide repeat-containing protein 1, apicoplast from Plasmodium falciparum (isolate 3D7).